The following is a 1196-amino-acid chain: MDTKPKTTTTVKVPPGPMGYVYGRACPAEGLELLSLLSARSGDADVAVAPLIVGLTVESGFEANVAAVVGSRTTGLGGTAVSLKLMPSHYSPSVYVFHGGRHLAPSTQAPNLTRLCERARPHFGFADYAPRPCDLKHETTGDALCERLGLDPDRALLYLVITEGFREAVCISNTFLHLGGMDKVTIGDAEVHRIPVYPLQMFMPDFSRVIADPFNCNHRSIGENFNYPLPFFNRPLARLLFEAVVGPAAVALRARNVDAVARAAAHLAFDENHEGAALPADITFTAFEASQGKPQRGARDAGNKGPAGGFEQRLASVMAGDAALALESIVSMAVFDEPPPDITTWPLLEGQETPAARAGAVGAYLARAAGLVGAMVFSTNSALHLTEVDDAGPADPKDHSKPSFYRFFLVPGTHVAANPQLDREGHVVPGYEGRPTAPLVGGTQEFAGEHLAMLCGFSPALLAKMLFYLERCDGGVIVGRQEMDVFRYVADSGQTDVPCNLCTFETRHACAHTTLMRLRARHPKFASAARGAIGVFGTMNSAYSDCDVLGNYAAFSALKRADGSENTRTIMQETYRAATERVMAELEALQYVDQAVPTALGRLETIIGNREALHTVVNNIKQLVDREVEQLMRNLIEGRNFKFRDGLAEANHAMSLSLDPYTCGPCPLLQLLARRSNLAVYQDLALSQCHGVFAGQSVEGRNFRNQFQPVLRRRVMDLFNNGFLSAKTLTVALSEGAAICAPSLTAGQTAPAESSFEGDVARVTLGFPKELRVKSRVLFAGASANASEAAKARVASLQSAYQKPDKRVDILLGPLGFLLKQFHAVIFPNGKPPGSNQPNPQWFWTALQRNQLPARLLSREDIETIAFIKRFSLDYGAINFINLAPNNVSELAMYYMANQILRYCDHSTYFINTLTAVIAGSRRPPSVQAAAAWAPQGGAGLEAGARALMDSLDAHPGAWTSMFASCNLLRPVMAARPMVVLGLSISKYYGMAGNDRVFQAGNWASLLGGKNACPLLIFDRTRKFVLACPRAGFVCAASSLGGGAHEHSLCEQLRGIIAEGGAAVASSVFVATVKSLGPRTQQLQIEDWLALLEDEYLSEEMMEFTTRALERGHGEWSTDAALEVAHEAEALVSQLGAAGEVFNFGDFGDEDDHAASFGGLAAAAGAAGVARKRAFHGDDPFGEGPPEKKDLTLDML.

A zinc finger spans residues 499–512 (CNLCTFETRHACAH). 2 short sequence motifs (required for filament formation) span residues 843 to 844 (FW) and 1142 to 1144 (FNF). A required for nuclear localization region spans residues 1171-1196 (RKRAFHGDDPFGEGPPEKKDLTLDML). Residues 1176–1196 (HGDDPFGEGPPEKKDLTLDML) are disordered.

This sequence belongs to the herpesviridae major DNA-binding protein family. Homooligomers. Forms double-helical filaments necessary for the formation of replication compartments within the host nucleus. Interacts with the origin-binding protein. Interacts with the helicase primase complex; this interaction stimulates primer synthesis activity of the helicase-primase complex. Interacts with the DNA polymerase. Interacts with the alkaline exonuclease; this interaction increases its nuclease processivity.

The protein localises to the host nucleus. Functionally, plays several crucial roles in viral infection. Participates in the opening of the viral DNA origin to initiate replication by interacting with the origin-binding protein. May disrupt loops, hairpins and other secondary structures present on ssDNA to reduce and eliminate pausing of viral DNA polymerase at specific sites during elongation. Promotes viral DNA recombination by performing strand-transfer, characterized by the ability to transfer a DNA strand from a linear duplex to a complementary single-stranded DNA circle. Can also catalyze the renaturation of complementary single strands. Additionally, reorganizes the host cell nucleus, leading to the formation of prereplicative sites and replication compartments. This process is driven by the protein which can form double-helical filaments in the absence of DNA. The polypeptide is Major DNA-binding protein (Human herpesvirus 2 (strain HG52) (HHV-2)).